Here is a 289-residue protein sequence, read N- to C-terminus: G1/S-specific cyclin-D2 (289 aa).

Residues Val-26 to Leu-151 enclose the Cyclin N-terminal domain. Positions Asp-264–Leu-289 are disordered. A Phosphoserine modification is found at Ser-271. Position 280 is a phosphothreonine (Thr-280).

It belongs to the cyclin family. Cyclin D subfamily. As to quaternary structure, interacts with either CDK4 or CDK6 protein kinase to form a serine/threonine kinase holoenzyme complex. The cyclin subunit imparts substrate specificity to the complex. Phosphorylation at Thr-280 by MAP kinases is required for ubiquitination and degradation by the DCX(AMBRA1) complex. Post-translationally, ubiquitinated by the DCX(AMBRA1) complex during the transition from G1 to S cell phase, leading to its degradation: ubiquitination is dependent on Thr-280 phosphorylation. The DCX(AMBRA1) complex represents the major regulator of CCND2 stability during the G1/S transition. Polyubiquitinated by the SCF(FBXL2) complex, leading to proteasomal degradation.

It localises to the nucleus. Its subcellular location is the cytoplasm. The protein localises to the nucleus membrane. Its function is as follows. Regulatory component of the cyclin D2-CDK4 (DC) complex that phosphorylates and inhibits members of the retinoblastoma (RB) protein family including RB1 and regulates the cell-cycle during G(1)/S transition. Phosphorylation of RB1 allows dissociation of the transcription factor E2F from the RB/E2F complex and the subsequent transcription of E2F target genes which are responsible for the progression through the G(1) phase. Hypophosphorylates RB1 in early G(1) phase. Cyclin D-CDK4 complexes are major integrators of various mitogenenic and antimitogenic signals. This Bos taurus (Bovine) protein is G1/S-specific cyclin-D2 (CCND2).